The chain runs to 420 residues: Nucleobindin-2 (420 aa).

A signal peptide spans 1–24 (MRWRIIQVQYCFLLVPCMLTALEA). The DNA-binding element occupies 171 to 223 (RTRHEEFKKYEMMKEHERREYLKTLSEEKRKEEESKFEEMKRKHEDHPKVNHP). Positions 193–225 (KTLSEEKRKEEESKFEEMKRKHEDHPKVNHPGS) are disordered. The binds to necdin stretch occupies residues 213–420 (KHEDHPKVNH…AGELKFEPHT (208 aa)). 2 EF-hand domains span residues 241-276 (PNDF…ELEK) and 293-328 (ERLR…KEFL). Aspartate 254, asparagine 256, aspartate 258, glutamate 265, aspartate 306, asparagine 308, aspartate 310, and glutamate 317 together coordinate Ca(2+). The short motif at 304 to 334 (EIDNNKDRLVTLEEFLRATEKKEFLEPDSWE) is the GBA element. The residue at position 332 (serine 332) is a Phosphoserine. Residues 365 to 389 (AEELQKQKEDLQRQHDHLEAQKQEY) are compositionally biased toward basic and acidic residues. The interval 365 to 420 (AEELQKQKEDLQRQHDHLEAQKQEYHQAVQHLEQKKLQQGIAPSGPAGELKFEPHT) is disordered.

Belongs to the nucleobindin family. As to quaternary structure, interacts (via GBA motif) with guanine nucleotide-binding protein G(i) alpha subunit GNAI3. Preferentially interacts with inactive rather than active GNAI3. Interaction with GNAI3 is inhibited when NUCB2 binds calcium, probably due to a conformational change which renders the GBA motif inaccessible. Binds to the postmitotic growth suppressor NDN; coexpression abolishes NUCB2 secretion. Interacts with MC4R. In terms of tissue distribution, found in liver, heart, thymus, muscle, intestine, kidney, lung, spleen and throughout the brain, in cerebral cortex, hippocampus, hypothalamus and medulla oblongata. Nucb2 and necdin levels were higher in postmitotic neurons.

It localises to the cytoplasm. It is found in the perikaryon. The protein resides in the endoplasmic reticulum. The protein localises to the golgi apparatus. Its subcellular location is the nucleus envelope. It localises to the membrane. It is found in the secreted. Its function is as follows. Calcium-binding protein which may have a role in calcium homeostasis. Acts as a non-receptor guanine nucleotide exchange factor which binds to and activates guanine nucleotide-binding protein (G-protein) alpha subunit GNAI3. Functionally, anorexigenic peptide, seems to play an important role in hypothalamic pathways regulating food intake and energy homeostasis, acting in a leptin-independent manner. May also exert hypertensive roles and modulate blood pressure through directly acting on peripheral arterial resistance. In intestinal epithelial cells, plays a role in the inhibition of hepatic glucose production via MC4R receptor leading to increased cyclic adenosine monophosphate (cAMP) levels and glucagon-like peptide 1 (GLP-1) secretion. This chain is Nucleobindin-2 (Nucb2), found in Mus musculus (Mouse).